Consider the following 84-residue polypeptide: Polyketide-8 synthase acyl carrier protein 1 (84 aa).

A Carrier domain is found at 7–82 (AARKQEIKEI…GVYVVVSEAA (76 aa)). Ser-42 carries the O-(pantetheine 4'-phosphoryl)serine modification.

4'-phosphopantetheine is transferred from CoA to a specific serine of the apo-ACP-like protein.

Functionally, acyl carrier protein. The protein is Polyketide-8 synthase acyl carrier protein 1 of Streptomyces avermitilis (strain ATCC 31267 / DSM 46492 / JCM 5070 / NBRC 14893 / NCIMB 12804 / NRRL 8165 / MA-4680).